A 123-amino-acid polypeptide reads, in one-letter code: Protein Wnt-7a (123 aa).

Ser-1 carries O-palmitoleoyl serine; by PORCN lipidation. Positions 33–61 (VEPVRTHRNKRPVFLKIKKPLSYRKPMVT) are disordered linker. Cys-89 and Cys-104 are joined by a disulfide. Asn-90 and Asn-96 each carry an N-linked (GlcNAc...) asparagine glycan.

Belongs to the Wnt family. As to quaternary structure, forms a soluble 1:1 complex with AFM; this prevents oligomerization and is required for prolonged biological activity. The complex with AFM may represent the physiological form in body fluids. Interacts with FZD5. Interacts with PORCN. Palmitoleoylation is required for efficient binding to frizzled receptors. Depalmitoleoylation leads to Wnt signaling pathway inhibition.

The protein localises to the secreted. The protein resides in the extracellular space. Its subcellular location is the extracellular matrix. Its function is as follows. Ligand for members of the frizzled family of seven transmembrane receptors that functions in the canonical Wnt/beta-catenin signaling pathway. Plays an important role in embryonic development, including dorsal versus ventral patterning during limb development, skeleton development and urogenital tract development. Required for central nervous system (CNS) angiogenesis and blood-brain barrier regulation. This is Protein Wnt-7a (WNT-7A) from Alopias vulpinus (Common thresher shark).